We begin with the raw amino-acid sequence, 310 residues long: Probable manganese-dependent inorganic pyrophosphatase (310 aa).

Residues histidine 10, aspartate 14, aspartate 16, aspartate 75, histidine 97, and aspartate 149 each contribute to the Mn(2+) site.

This sequence belongs to the PPase class C family. The cofactor is Mn(2+).

The protein resides in the cytoplasm. The catalysed reaction is diphosphate + H2O = 2 phosphate + H(+). The polypeptide is Probable manganese-dependent inorganic pyrophosphatase (Clostridium acetobutylicum (strain ATCC 824 / DSM 792 / JCM 1419 / IAM 19013 / LMG 5710 / NBRC 13948 / NRRL B-527 / VKM B-1787 / 2291 / W)).